Here is a 194-residue protein sequence, read N- to C-terminus: Protein GrpE (194 aa).

Residues 1–40 (MSRKHHKEQEEIQEQETISAGAAETPAEETAAIPAATEAD) are disordered. Positions 20-38 (AGAAETPAEETAAIPAATE) are enriched in low complexity.

Belongs to the GrpE family. As to quaternary structure, homodimer.

The protein resides in the cytoplasm. Functionally, participates actively in the response to hyperosmotic and heat shock by preventing the aggregation of stress-denatured proteins, in association with DnaK and GrpE. It is the nucleotide exchange factor for DnaK and may function as a thermosensor. Unfolded proteins bind initially to DnaJ; upon interaction with the DnaJ-bound protein, DnaK hydrolyzes its bound ATP, resulting in the formation of a stable complex. GrpE releases ADP from DnaK; ATP binding to DnaK triggers the release of the substrate protein, thus completing the reaction cycle. Several rounds of ATP-dependent interactions between DnaJ, DnaK and GrpE are required for fully efficient folding. The chain is Protein GrpE from Chlorobaculum tepidum (strain ATCC 49652 / DSM 12025 / NBRC 103806 / TLS) (Chlorobium tepidum).